Consider the following 429-residue polypeptide: Adenylosuccinate synthetase (429 aa).

GTP contacts are provided by residues 12 to 18 (GDEGKGK) and 40 to 42 (GHT). The active-site Proton acceptor is the aspartate 13. The Mg(2+) site is built by aspartate 13 and glycine 40. Residues 13 to 16 (DEGK), 38 to 41 (NAGH), threonine 128, arginine 142, glutamine 223, threonine 238, and arginine 302 each bind IMP. Histidine 41 functions as the Proton donor in the catalytic mechanism. 298 to 304 (VNTGRPR) is a binding site for substrate. GTP-binding positions include arginine 304, 330–332 (KLD), and 412–414 (GVG).

This sequence belongs to the adenylosuccinate synthetase family. Homodimer. Mg(2+) is required as a cofactor.

The protein localises to the cytoplasm. It carries out the reaction IMP + L-aspartate + GTP = N(6)-(1,2-dicarboxyethyl)-AMP + GDP + phosphate + 2 H(+). It participates in purine metabolism; AMP biosynthesis via de novo pathway; AMP from IMP: step 1/2. Functionally, plays an important role in the de novo pathway of purine nucleotide biosynthesis. Catalyzes the first committed step in the biosynthesis of AMP from IMP. This Corynebacterium urealyticum (strain ATCC 43042 / DSM 7109) protein is Adenylosuccinate synthetase.